A 142-amino-acid polypeptide reads, in one-letter code: Hemoglobin subunit beta-1 (142 aa).

One can recognise a Globin domain in the interval 2–142 (SLTDEEIRLI…VTEALSCQYH (141 aa)). Heme b is bound by residues H59 and H88.

This sequence belongs to the globin family. As to quaternary structure, heterotetramer of two alpha chains and two beta chains. As to expression, red blood cells.

Functionally, involved in oxygen transport from the lung to the various peripheral tissues. This is Hemoglobin subunit beta-1 (HBB1) from Torpedo marmorata (Marbled electric ray).